The primary structure comprises 470 residues: Solvent efflux pump outer membrane protein SrpC (470 aa).

An N-terminal signal peptide occupies residues 1–16 (MKFKSLPMFALLMLGG). A lipid anchor (N-palmitoyl cysteine) is attached at C17. C17 carries S-diacylglycerol cysteine lipidation. The segment at 104–123 (LDGQASGNRTRLPDDLSPTG) is disordered.

Belongs to the outer membrane factor (OMF) (TC 1.B.17) family.

It is found in the cell outer membrane. Functionally, the outer membrane component of an organic solvent efflux pump. Involved in export of a number of low log POW compounds including hexane (log POW 3.5), toluene (log POW 2.5) and dimethylphthalate (log POW 2.3). The solvent resistance phenotype has been postulated to depend on the operon expression level. The protein is Solvent efflux pump outer membrane protein SrpC (srpC) of Pseudomonas putida (Arthrobacter siderocapsulatus).